The sequence spans 384 residues: MAP kinase-activated protein kinase 3 (384 aa).

Position 1 is an N-acetylmethionine (Met-1). The tract at residues 1 to 22 (MDVETAEEQGGPAPPSGVPCGP) is disordered. The region spanning 46–306 (QLSKQVLGLG…ITQFMNHPWI (261 aa)) is the Protein kinase domain. Residues 52-60 (LGLGVNGKV) and Lys-75 contribute to the ATP site. Residue Asp-168 is the Proton acceptor of the active site. Position 203 is a phosphothreonine; by MAPK14 (Thr-203). Position 253 is a phosphoserine; by MAPK14 (Ser-253). Ser-309 bears the Phosphoserine; by autocatalysis mark. Residues 309 to 345 (SMVVPQTPLHTARVLQEDRDHWDEVKEEMTSALATMR) form an autoinhibitory helix region. Thr-315 bears the Phosphothreonine; by MAPK14 mark. A Nuclear export signal (NES) motif is present at residues 337–346 (MTSALATMRV). The tract at residues 347 to 371 (DYDQVKIKDLKTSNNRLLNKRRKKQ) is p38 MAPK-binding site. Short sequence motifs (bipartite nuclear localization signal) lie at residues 352-355 (KIKD) and 366-370 (KRRKK). The tract at residues 359-384 (SNNRLLNKRRKKQAGSSSGSQGCNNQ) is disordered. The span at 373 to 384 (GSSSGSQGCNNQ) shows a compositional bias: low complexity.

This sequence belongs to the protein kinase superfamily. CAMK Ser/Thr protein kinase family. In terms of assembly, heterodimer with p38-alpha/MAPK14. The heterodimer with p38-alpha/MAPK14 forms a stable complex: molecules are positioned 'face to face' so that the ATP-binding sites of both kinases are at the heterodimer interface. Interacts with TCF3 and with polycomb proteins, such as PCH2 and BMI1/PCGF4. Phosphorylated and activated by MAPK1/ERK2 and MAPK3/ERK1. Phosphorylated and activated by MAP kinase p38-alpha/MAPK14 at Thr-203, Ser-253 and Thr-315.

It localises to the nucleus. The protein localises to the cytoplasm. The catalysed reaction is L-seryl-[protein] + ATP = O-phospho-L-seryl-[protein] + ADP + H(+). It catalyses the reaction L-threonyl-[protein] + ATP = O-phospho-L-threonyl-[protein] + ADP + H(+). With respect to regulation, activated following phosphorylation by p38-alpha/MAPK14 following various stresses. Inhibited by ligand 5B (2'-[2-(1,3-benzodioxol-5-yl)pyrimidin-4-yl]-5',6'-dihydrospiro[piperidine-4,7'-pyrrolo[3,2-c]pyridin]- 4'(1'h)-one) and ligand P4O (2-[2-(2-fluorophenyl)pyridin-4-yl]-1,5,6,7-tetrahydro- 4h-pyrrolo[3,2-c]pyridin-4-one), 2 ATP-competitive inhibitors. Stress-activated serine/threonine-protein kinase involved in cytokines production, endocytosis, cell migration, chromatin remodeling and transcriptional regulation. Following stress, it is phosphorylated and activated by MAP kinase p38-alpha/MAPK14, leading to phosphorylation of substrates. Phosphorylates serine in the peptide sequence, Hyd-X-R-X(2)-S, where Hyd is a large hydrophobic residue. MAPKAPK2 and MAPKAPK3, share the same function and substrate specificity, but MAPKAPK3 kinase activity and level in protein expression are lower compared to MAPKAPK2. Phosphorylates HSP27/HSPB1, KRT18, KRT20, RCSD1, RPS6KA3, TAB3 and TTP/ZFP36. Mediates phosphorylation of HSP27/HSPB1 in response to stress, leading to dissociate HSP27/HSPB1 from large small heat-shock protein (sHsps) oligomers and impair their chaperone activities and ability to protect against oxidative stress effectively. Involved in inflammatory response by regulating tumor necrosis factor (TNF) and IL6 production post-transcriptionally: acts by phosphorylating AU-rich elements (AREs)-binding proteins, such as TTP/ZFP36, leading to regulate the stability and translation of TNF and IL6 mRNAs. Phosphorylation of TTP/ZFP36, a major post-transcriptional regulator of TNF, promotes its binding to 14-3-3 proteins and reduces its ARE mRNA affinity leading to inhibition of dependent degradation of ARE-containing transcript. Involved in toll-like receptor signaling pathway (TLR) in dendritic cells: required for acute TLR-induced macropinocytosis by phosphorylating and activating RPS6KA3. Also acts as a modulator of Polycomb-mediated repression. The chain is MAP kinase-activated protein kinase 3 (MAPKAPK3) from Bos taurus (Bovine).